The chain runs to 244 residues: Ribosomal RNA large subunit methyltransferase E (244 aa).

Positions 81, 83, 109, 125, and 149 each coordinate S-adenosyl-L-methionine. Lys-189 serves as the catalytic Proton acceptor.

The protein belongs to the class I-like SAM-binding methyltransferase superfamily. RNA methyltransferase RlmE family.

It localises to the cytoplasm. It carries out the reaction uridine(2552) in 23S rRNA + S-adenosyl-L-methionine = 2'-O-methyluridine(2552) in 23S rRNA + S-adenosyl-L-homocysteine + H(+). Its function is as follows. Specifically methylates the uridine in position 2552 of 23S rRNA at the 2'-O position of the ribose in the fully assembled 50S ribosomal subunit. The sequence is that of Ribosomal RNA large subunit methyltransferase E from Cereibacter sphaeroides (strain ATCC 17029 / ATH 2.4.9) (Rhodobacter sphaeroides).